The primary structure comprises 329 residues: Protein Brevis radix-like 4 (329 aa).

The disordered stretch occupies residues 12–37 (SGTSRHHGQQRRGGSPPPRGRTTSVY). The BRX 1 domain maps to 86–142 (REWVAQVEPGVQITFVSLAGGGGNDLKRIRFSREMYDKWQAQKWWGENNERIMELYN). Residues 151–263 (LPTPPRSDDG…TTSCSSRDEV (113 aa)) are disordered. 2 stretches are compositionally biased toward low complexity: residues 222–236 (SNPS…QQPQ) and 243–252 (AAASDAMDAA). Residues 253 to 263 (RTTSCSSRDEV) show a composition bias toward polar residues. Residues 274–329 (TEWVIQDEPGVYITVRELADGTRELRRVRFSRERFAELNAKLWWEENKERIQAQYL) form the BRX 2 domain.

Belongs to the BRX family.

It is found in the nucleus. This is Protein Brevis radix-like 4 (BRXL4) from Oryza sativa subsp. japonica (Rice).